A 68-amino-acid polypeptide reads, in one-letter code: Adipokinetic prohormone type 1 (68 aa).

A signal peptide spans 1–20; the sequence is MNKIYFVIVFVACFCLFAEA. Position 21 is a pyrrolidone carboxylic acid (Gln-21). Gly-30 is subject to Glycine amide. Residues 34–68 constitute a propeptide that is removed on maturation; the sequence is SGVAPMSCKNEEAVATIFKLIQNEAERFIICQQKS.

As to expression, expressed in antennal lobe (AL), corpora cardiaca (CC), corpora allata (CA) and gnathal ganglion (GNG) (at protein level). Expression in CC and CA detected in all animals, expression in GNG in some animals and in AL in few animals (at protein level).

The protein resides in the secreted. In terms of biological role, this hormone, released from cells in the corpora cardiaca, causes release of diglycerides from the fat body and stimulation of muscles to use these diglycerides as an energy source during energy-demanding processes. This chain is Adipokinetic prohormone type 1, found in Agrotis ipsilon (Black cutworm moth).